Reading from the N-terminus, the 239-residue chain is EF-hand domain-containing protein D2 (239 aa).

The segment at methionine 1–aspartate 51 is disordered. Alanine 2 carries the N-acetylalanine modification. Serine 11 is modified (phosphoserine). The segment covering alanine 32 to alanine 46 has biased composition (low complexity). Phosphoserine is present on residues serine 73 and serine 75. Tyrosine 82 bears the Phosphotyrosine mark. EF-hand domains are found at residues lysine 91–proline 126 and glutamine 127–glycine 162. 8 residues coordinate Ca(2+): aspartate 104, aspartate 108, glutamate 115, aspartate 140, aspartate 142, aspartate 144, lysine 146, and glutamate 151. The residue at position 232 (lysine 232) is an N6-acetyllysine.

Interacts with CASP9; with inactive form.

Its subcellular location is the membrane raft. Its function is as follows. May regulate B-cell receptor (BCR)-induced immature and primary B-cell apoptosis. Plays a role as negative regulator of the canonical NF-kappa-B-activating branch. Controls spontaneous apoptosis through the regulation of BCL2L1 abundance. The chain is EF-hand domain-containing protein D2 (Efhd2) from Rattus norvegicus (Rat).